Reading from the N-terminus, the 162-residue chain is NRR repressor homolog 3 (162 aa).

Positions 1–80 (MDPTMPTPHT…GHEEEARDED (80 aa)) are disordered. Residues 7–24 (TPHTISGTSPFPRNSSTA) show a composition bias toward polar residues. Over residues 37-46 (PRHRRSRKRD) the composition is skewed to basic residues. Residues 69–80 (GHGHEEEARDED) are compositionally biased toward basic and acidic residues.

The protein belongs to the NPR1-interactor family. In terms of assembly, interacts with NPR1/NH1. Interacts with NPR3/NH3.

It localises to the nucleus. In terms of biological role, binds to and represses NPR1/NH1-mediated transcriptional activation of LG2 in vitro. The polypeptide is NRR repressor homolog 3 (Oryza sativa subsp. japonica (Rice)).